Consider the following 75-residue polypeptide: DNA-directed RNA polymerase subunit omega (75 aa).

It belongs to the RNA polymerase subunit omega family. In cyanobacteria the RNAP catalytic core is composed of 2 alpha, 1 beta, 1 beta', 1 gamma and 1 omega subunit. When a sigma factor is associated with the core the holoenzyme is formed, which can initiate transcription.

It catalyses the reaction RNA(n) + a ribonucleoside 5'-triphosphate = RNA(n+1) + diphosphate. Promotes RNA polymerase assembly. Latches the N- and C-terminal regions of the beta' subunit thereby facilitating its interaction with the beta and alpha subunits. This chain is DNA-directed RNA polymerase subunit omega, found in Prochlorococcus marinus (strain MIT 9313).